Reading from the N-terminus, the 144-residue chain is Large ribosomal subunit protein uL16 (144 aa).

Over residues 1 to 19 (MLLPKRVKYRRQHRPKTTG) the composition is skewed to basic residues. The disordered stretch occupies residues 1 to 26 (MLLPKRVKYRRQHRPKTTGRSKGGNE).

Belongs to the universal ribosomal protein uL16 family. As to quaternary structure, part of the 50S ribosomal subunit.

Functionally, binds 23S rRNA and is also seen to make contacts with the A and possibly P site tRNAs. The protein is Large ribosomal subunit protein uL16 of Macrococcus caseolyticus (strain JCSC5402) (Macrococcoides caseolyticum).